A 333-amino-acid chain; its full sequence is Glycerol-3-phosphate dehydrogenase [NAD(P)+] (333 aa).

NADPH is bound by residues Ser10, Trp11, His31, Arg32, and Lys105. Sn-glycerol 3-phosphate-binding residues include Lys105, Gly136, and Ser138. Residue Ala140 participates in NADPH binding. Sn-glycerol 3-phosphate-binding residues include Lys191, Asp244, Ser254, Arg255, and Asn256. Lys191 acts as the Proton acceptor in catalysis. NADPH is bound at residue Arg255. 2 residues coordinate NADPH: Ile279 and Glu281.

It belongs to the NAD-dependent glycerol-3-phosphate dehydrogenase family.

The protein resides in the cytoplasm. It carries out the reaction sn-glycerol 3-phosphate + NAD(+) = dihydroxyacetone phosphate + NADH + H(+). It catalyses the reaction sn-glycerol 3-phosphate + NADP(+) = dihydroxyacetone phosphate + NADPH + H(+). The protein operates within membrane lipid metabolism; glycerophospholipid metabolism. Functionally, catalyzes the reduction of the glycolytic intermediate dihydroxyacetone phosphate (DHAP) to sn-glycerol 3-phosphate (G3P), the key precursor for phospholipid synthesis. This chain is Glycerol-3-phosphate dehydrogenase [NAD(P)+], found in Chlorobium luteolum (strain DSM 273 / BCRC 81028 / 2530) (Pelodictyon luteolum).